Here is a 56-residue protein sequence, read N- to C-terminus: MAAKGGREKIKLESTAGTGHFYTTTKNKKTMPEKMAIMKFDPKARKHVTYKEIKLK.

This sequence belongs to the bacterial ribosomal protein bL33 family.

In Delftia acidovorans (strain DSM 14801 / SPH-1), this protein is Large ribosomal subunit protein bL33.